Consider the following 309-residue polypeptide: Oxidoreductase NAD-binding domain-containing protein 1 (309 aa).

An N-terminal signal peptide occupies residues 1–14 (MVVVIPRLLRGSLG). One can recognise an FAD-binding FR-type domain in the interval 47–161 (HLERTADVVR…VGGEFFFDPK (115 aa)). 175-180 (GVGINP) lines the NAD(+) pocket.

This chain is Oxidoreductase NAD-binding domain-containing protein 1 (OXNAD1), found in Bos taurus (Bovine).